The following is a 724-amino-acid chain: Semaphorin-2A (724 aa).

Residues 1 to 25 form the signal peptide; sequence MSLLQLSPLLALLLLLCSSVSETAA. Residues 45 to 522 enclose the Sema domain; that stretch reads QGNNNYGKHG…TDHRIKQIDL (478 aa). Asparagine 95 is a glycosylation site (N-linked (GlcNAc...) asparagine). Cysteine 118 and cysteine 129 are oxidised to a cystine. Residues asparagine 163, asparagine 190, asparagine 229, and asparagine 314 are each glycosylated (N-linked (GlcNAc...) asparagine). Intrachain disulfides connect cysteine 291–cysteine 399 and cysteine 315–cysteine 358. N-linked (GlcNAc...) asparagine glycosylation is present at asparagine 401. Intrachain disulfides connect cysteine 525–cysteine 541 and cysteine 535–cysteine 550. Residues 552-663 enclose the Ig-like C2-type domain; the sequence is PYELDLLQDV…LCSYNITVDA (112 aa). Asparagine 563 carries N-linked (GlcNAc...) asparagine glycosylation. The cysteines at positions 590 and 647 are disulfide-linked. N-linked (GlcNAc...) asparagine glycosylation is found at asparagine 658, asparagine 670, and asparagine 708.

This sequence belongs to the semaphorin family. Interacts with PlexB. In terms of tissue distribution, transiently expressed by a single large muscle during motoneuron outgrowth and synapse formation.

The protein resides in the secreted. Functionally, ligand for transmembrane receptor PlexB. Plays a role in growth cone guidance. Required for both proper adult behavior and survival. Can function as a selective target-derived signal that inhibits the formation of specific synaptic terminal arbors. Function in neurons is essential for adult survival, motor neuron survival, and is important for climbing behavior and activity. During embryogenesis, plays an important role in correct salivary gland positioning. This is Semaphorin-2A from Drosophila melanogaster (Fruit fly).